Reading from the N-terminus, the 121-residue chain is MALNIENIIAEIKEASILELNDLVKAIEEEFGVTAAAPVAAAAAGGAEEAAKDSFDVELTSAGDKKVGVIKAVREITGLGLKEAKGLVDGAPANVKEGVAAAEAEEIKAKLEEAGATITLK.

This sequence belongs to the bacterial ribosomal protein bL12 family. As to quaternary structure, homodimer. Part of the ribosomal stalk of the 50S ribosomal subunit. Forms a multimeric L10(L12)X complex, where L10 forms an elongated spine to which 2 to 4 L12 dimers bind in a sequential fashion. Binds GTP-bound translation factors.

In terms of biological role, forms part of the ribosomal stalk which helps the ribosome interact with GTP-bound translation factors. Is thus essential for accurate translation. The chain is Large ribosomal subunit protein bL12 from Streptococcus pyogenes serotype M3 (strain ATCC BAA-595 / MGAS315).